Here is a 925-residue protein sequence, read N- to C-terminus: Translation initiation factor IF-2 (925 aa).

2 disordered regions span residues 52-84 (GGGK…VKAP) and 98-326 (AGGN…GVRL). The span at 57–68 (AEGAAKAPAKAA) shows a compositional bias: low complexity. Residues 69–84 (AKGDAKTAAKGDVKAP) are compositionally biased toward basic and acidic residues. Positions 98-138 (AGGNGEAAAPPAQPGGTATTPAAQATPEAPARPGPAAARPS) are enriched in low complexity. Pro residues-rich tracts occupy residues 139-169 (APAP…PAPK) and 193-207 (PRPV…PGAP). Residues 236–296 (RPGGGRPGGP…GAAGAFGRPG (61 aa)) show a composition bias toward gly residues. A compositionally biased stretch (basic residues) spans 300–309 (RRGRKSKRQK). The 172-residue stretch at 421 to 592 (TRPPVVTVMG…AVLLTADAAL (172 aa)) folds into the tr-type G domain. The G1 stretch occupies residues 430–437 (GHVDHGKT). Position 430–437 (430–437 (GHVDHGKT)) interacts with GTP. The interval 455-459 (GITQH) is G2. The G3 stretch occupies residues 480–483 (DTPG). GTP is bound by residues 480 to 484 (DTPGH) and 534 to 537 (NKID). The segment at 534-537 (NKID) is G4. The interval 570–572 (SAK) is G5.

This sequence belongs to the TRAFAC class translation factor GTPase superfamily. Classic translation factor GTPase family. IF-2 subfamily.

The protein resides in the cytoplasm. Its function is as follows. One of the essential components for the initiation of protein synthesis. Protects formylmethionyl-tRNA from spontaneous hydrolysis and promotes its binding to the 30S ribosomal subunits. Also involved in the hydrolysis of GTP during the formation of the 70S ribosomal complex. The sequence is that of Translation initiation factor IF-2 from Mycolicibacterium paratuberculosis (strain ATCC BAA-968 / K-10) (Mycobacterium paratuberculosis).